The sequence spans 249 residues: Microvitellogenin (249 aa).

The N-terminal stretch at 1-17 is a signal peptide; it reads MLRTTVVLLTLAAIAFA.

Small vitellogenic protein found in females. It is synthesized in the fat body, secreted into the hemolymph, and taken up by developing oocytes. The protein is Microvitellogenin (MVG) of Manduca sexta (Tobacco hawkmoth).